The sequence spans 181 residues: Adenine phosphoribosyltransferase 1 (181 aa).

The protein belongs to the purine/pyrimidine phosphoribosyltransferase family. Homodimer.

The protein resides in the cytoplasm. The enzyme catalyses AMP + diphosphate = 5-phospho-alpha-D-ribose 1-diphosphate + adenine. It participates in purine metabolism; AMP biosynthesis via salvage pathway; AMP from adenine: step 1/1. In terms of biological role, catalyzes a salvage reaction resulting in the formation of AMP, that is energically less costly than de novo synthesis. The protein is Adenine phosphoribosyltransferase 1 (APT1) of Triticum aestivum (Wheat).